Reading from the N-terminus, the 265-residue chain is Sulfur carrier protein FdhD (265 aa).

The active-site Cysteine persulfide intermediate is Cys-107.

The protein belongs to the FdhD family.

Its subcellular location is the cytoplasm. In terms of biological role, required for formate dehydrogenase (FDH) activity. Acts as a sulfur carrier protein that transfers sulfur from IscS to the molybdenum cofactor prior to its insertion into FDH. The chain is Sulfur carrier protein FdhD from Staphylococcus aureus (strain NCTC 8325 / PS 47).